The primary structure comprises 218 residues: Leucine-rich repeat protein 2 (218 aa).

The N-terminal stretch at 1 to 27 (MVAQNSRRELLAASLILTLALIRLTEA) is a signal peptide. 5 LRR repeats span residues 69–93 (HHQV…LGKL), 94–117 (EHLQ…LGNL), 119–141 (SLIS…LGKL), 142–165 (KSLV…LTVI), and 167–190 (SLKV…PFEH).

Probably involved in plant defense response. The sequence is that of Leucine-rich repeat protein 2 from Arabidopsis thaliana (Mouse-ear cress).